The following is a 267-amino-acid chain: Tryptophan synthase alpha chain (267 aa).

Catalysis depends on proton acceptor residues Glu-49 and Asp-60.

Belongs to the TrpA family. As to quaternary structure, tetramer of two alpha and two beta chains.

It carries out the reaction (1S,2R)-1-C-(indol-3-yl)glycerol 3-phosphate + L-serine = D-glyceraldehyde 3-phosphate + L-tryptophan + H2O. Its pathway is amino-acid biosynthesis; L-tryptophan biosynthesis; L-tryptophan from chorismate: step 5/5. Its function is as follows. The alpha subunit is responsible for the aldol cleavage of indoleglycerol phosphate to indole and glyceraldehyde 3-phosphate. This chain is Tryptophan synthase alpha chain, found in Rippkaea orientalis (strain PCC 8801 / RF-1) (Cyanothece sp. (strain PCC 8801)).